The sequence spans 358 residues: MNTFGKSFRVSTFGESHGEGIGCVIDGIPAGLHIDELFIESMMTRRAPGRNQYTTQRKESDKVQILSGVFEGLSTGTPIGMWIANTGTKSSDYANIKDIFRPGHADYTYFKKYGIRDYRGGGRSSARESVARVAAGAVAQMLLREFDINVQSGICSIGNITGKQYDFAYALKSEIYALDKECEESQKALIENAKRKHDSIGGSALIRVEGLPAGLGEPLYHRLDGALGEALMGLNAVKAVEIGDGIISCTQYGSEHNDQMDKNGFKSNHSGGILGGISNGNALLVKAHFKPTPSIFIPQETLDIHLQEQTCQIKGRHDPCVAVRGSIVAQAMVALVLADMLLLHATSQLCFLKKIYKQ.

R46 provides a ligand contact to NADP(+). Residues 123–125 (RSS), 235–236 (NA), G275, 290–294 (KPTPS), and R316 each bind FMN.

The protein belongs to the chorismate synthase family. Homotetramer. Requires FMNH2 as cofactor.

It carries out the reaction 5-O-(1-carboxyvinyl)-3-phosphoshikimate = chorismate + phosphate. It participates in metabolic intermediate biosynthesis; chorismate biosynthesis; chorismate from D-erythrose 4-phosphate and phosphoenolpyruvate: step 7/7. Its function is as follows. Catalyzes the anti-1,4-elimination of the C-3 phosphate and the C-6 proR hydrogen from 5-enolpyruvylshikimate-3-phosphate (EPSP) to yield chorismate, which is the branch point compound that serves as the starting substrate for the three terminal pathways of aromatic amino acid biosynthesis. This reaction introduces a second double bond into the aromatic ring system. In Helicobacter hepaticus (strain ATCC 51449 / 3B1), this protein is Chorismate synthase.